A 198-amino-acid polypeptide reads, in one-letter code: Transcription factor elt-7 (198 aa).

Positions 1-18 (MLPETTTLQPLPSVTTIM) are enriched in polar residues. Positions 1–20 (MLPETTTLQPLPSVTTIMNE) are disordered. The GATA-type zinc-finger motif lies at 143–167 (CSHCSTTTTTLWRKNDEGNLECNAC).

It localises to the nucleus. In terms of biological role, transcriptional activator that binds to the consensus sequence 5'-[AT]GATA[AG]-3'. Required for gut-specific differentiation, specifically acting with the GATA region-binding transcription factor elt-2 to control normal gene expression and promote normal formation of the intestine. May have a protective role in response to infection by Gram-negative bacteria such as P.aeruginosa. This is Transcription factor elt-7 from Caenorhabditis elegans.